The sequence spans 179 residues: Large ribosomal subunit protein uL5 (179 aa).

The protein belongs to the universal ribosomal protein uL5 family. In terms of assembly, part of the 50S ribosomal subunit; part of the 5S rRNA/L5/L18/L25 subcomplex. Contacts the 5S rRNA and the P site tRNA. Forms a bridge to the 30S subunit in the 70S ribosome.

Functionally, this is one of the proteins that bind and probably mediate the attachment of the 5S RNA into the large ribosomal subunit, where it forms part of the central protuberance. In the 70S ribosome it contacts protein S13 of the 30S subunit (bridge B1b), connecting the 2 subunits; this bridge is implicated in subunit movement. Contacts the P site tRNA; the 5S rRNA and some of its associated proteins might help stabilize positioning of ribosome-bound tRNAs. In Herpetosiphon aurantiacus (strain ATCC 23779 / DSM 785 / 114-95), this protein is Large ribosomal subunit protein uL5.